A 281-amino-acid polypeptide reads, in one-letter code: Sulfur carrier protein FdhD (281 aa).

The active-site Cysteine persulfide intermediate is the cysteine 117.

It belongs to the FdhD family.

The protein resides in the cytoplasm. Its function is as follows. Required for formate dehydrogenase (FDH) activity. Acts as a sulfur carrier protein that transfers sulfur from IscS to the molybdenum cofactor prior to its insertion into FDH. This is Sulfur carrier protein FdhD from Xanthomonas euvesicatoria pv. vesicatoria (strain 85-10) (Xanthomonas campestris pv. vesicatoria).